Reading from the N-terminus, the 534-residue chain is MSDSRQNSQREDNYSRDRRSRFTEDSYSRRDSQRSGNEAPRESRYYRKEEHLQERSRSRSPARDSRWKSSSSGFAPAHPPIEEPTNNGAEAAAAAARRIAESLQSTKATSSRTSYDHSEGITSTTSASPPSAPAPPLPPSSEGPAVDIPPSMADITSKVIEGDGVFMQDVEINNVRNRYILVRASTLSEIENKSGVQLFSKGRYYPNKALATDKDPPLYLHIVSHNRKDLTVALQEIESWINKDMGPLIDERRFRRREDNERNNSNSPRNFSTHGNGNGENGQPRRKWLEEKVYINLTPSRGFHLRQAIVGPQGAYVKHIQQETRTRVQIKGQGSAFIEPSTNRESDEPIHLCIMSHDPNAIQRAKVLCEDLIASVHQQYKAWKSQPKDRDQNQGNRAYNPPNRNQAFSARDSRQEKTQPTNASPAPLVTPSLPVPSIPAVPGMEAMAMPPGVTSSIAVPTTSSMPLQGMPTMFGAPGVSAPGTEAPGTGTPGLTTPGVDPYAAYGGYNAYVQYYQQQIYAQMHGVSGDQSHPQ.

3 disordered regions span residues 1–150 (MSDS…DIPP), 252–284 (RRFR…NGQP), and 383–434 (WKSQ…PSLP). Basic and acidic residues predominate over residues 8–67 (SQREDNYSRDRRSRFTEDSYSRRDSQRSGNEAPRESRYYRKEEHLQERSRSRSPARDSRW). Residues 102–113 (SLQSTKATSSRT) show a composition bias toward polar residues. The segment covering 130-141 (PSAPAPPLPPSS) has biased composition (pro residues). Residues 252–262 (RRFRRREDNER) are compositionally biased toward basic and acidic residues. A compositionally biased stretch (low complexity) spans 263–272 (NNSNSPRNFS). Polar residues predominate over residues 393–408 (NQGNRAYNPPNRNQAF).

This is an uncharacterized protein from Schizosaccharomyces pombe (strain 972 / ATCC 24843) (Fission yeast).